A 291-amino-acid polypeptide reads, in one-letter code: 4-hydroxy-tetrahydrodipicolinate synthase (291 aa).

Residue T47 coordinates pyruvate. Catalysis depends on Y134, which acts as the Proton donor/acceptor. The active-site Schiff-base intermediate with substrate is the K162. I205 lines the pyruvate pocket.

The protein belongs to the DapA family. As to quaternary structure, homotetramer; dimer of dimers.

Its subcellular location is the cytoplasm. The catalysed reaction is L-aspartate 4-semialdehyde + pyruvate = (2S,4S)-4-hydroxy-2,3,4,5-tetrahydrodipicolinate + H2O + H(+). It participates in amino-acid biosynthesis; L-lysine biosynthesis via DAP pathway; (S)-tetrahydrodipicolinate from L-aspartate: step 3/4. Functionally, catalyzes the condensation of (S)-aspartate-beta-semialdehyde [(S)-ASA] and pyruvate to 4-hydroxy-tetrahydrodipicolinate (HTPA). The polypeptide is 4-hydroxy-tetrahydrodipicolinate synthase (Methanospirillum hungatei JF-1 (strain ATCC 27890 / DSM 864 / NBRC 100397 / JF-1)).